We begin with the raw amino-acid sequence, 353 residues long: Sorbitol dehydrogenase (353 aa).

Zn(2+) is bound at residue Cys-45. Residue Tyr-51 coordinates substrate. Zn(2+) is bound by residues His-70 and Glu-71. Glu-156 is a binding site for substrate. NAD(+)-binding positions include Val-184, Asp-204, Arg-209, 271–273, and 296–298; these read VGL and IFR. Substrate-binding residues include Arg-298 and Tyr-299.

It belongs to the zinc-containing alcohol dehydrogenase family. Homotetramer. It depends on Zn(2+) as a cofactor.

The enzyme catalyses keto-D-fructose + NADH + H(+) = D-sorbitol + NAD(+). The catalysed reaction is xylitol + NAD(+) = D-xylulose + NADH + H(+). It carries out the reaction L-iditol + NAD(+) = keto-L-sorbose + NADH + H(+). Functionally, polyol dehydrogenase that catalyzes the NAD(+)-dependent oxidation of various sugar alcohols. Is mostly active with D-sorbitol (D-glucitol), xylitol and L-iditol as substrates, leading to the C2-oxidized products D-fructose, D-xylulose and L-sorbose, respectively. This Bacillus subtilis (strain 168) protein is Sorbitol dehydrogenase.